Reading from the N-terminus, the 342-residue chain is tRNA N6-adenosine threonylcarbamoyltransferase (342 aa).

Fe cation-binding residues include His111 and His115. Substrate contacts are provided by residues Val133–Gly137, Asp166, Gly179, Asp183, and Asn273. Asp301 is a Fe cation binding site.

This sequence belongs to the KAE1 / TsaD family. Requires Fe(2+) as cofactor.

The protein localises to the cytoplasm. It catalyses the reaction L-threonylcarbamoyladenylate + adenosine(37) in tRNA = N(6)-L-threonylcarbamoyladenosine(37) in tRNA + AMP + H(+). Functionally, required for the formation of a threonylcarbamoyl group on adenosine at position 37 (t(6)A37) in tRNAs that read codons beginning with adenine. Is involved in the transfer of the threonylcarbamoyl moiety of threonylcarbamoyl-AMP (TC-AMP) to the N6 group of A37, together with TsaE and TsaB. TsaD likely plays a direct catalytic role in this reaction. The sequence is that of tRNA N6-adenosine threonylcarbamoyltransferase from Trichlorobacter lovleyi (strain ATCC BAA-1151 / DSM 17278 / SZ) (Geobacter lovleyi).